The chain runs to 404 residues: S-adenosylmethionine synthase (404 aa).

His-17 is a binding site for ATP. Position 19 (Asp-19) interacts with Mg(2+). Glu-45 is a K(+) binding site. 2 residues coordinate L-methionine: Glu-58 and Gln-101. The interval 101-111 is flexible loop; sequence QSPDINRGVDR. Residues 172-174, 246-247, Asp-255, 261-262, Ala-278, and Lys-282 contribute to the ATP site; these read DAK, RF, and RK. Asp-255 contacts L-methionine. Lys-286 serves as a coordination point for L-methionine.

It belongs to the AdoMet synthase family. As to quaternary structure, homotetramer; dimer of dimers. Requires Mg(2+) as cofactor. K(+) is required as a cofactor.

Its subcellular location is the cytoplasm. The catalysed reaction is L-methionine + ATP + H2O = S-adenosyl-L-methionine + phosphate + diphosphate. The protein operates within amino-acid biosynthesis; S-adenosyl-L-methionine biosynthesis; S-adenosyl-L-methionine from L-methionine: step 1/1. Catalyzes the formation of S-adenosylmethionine (AdoMet) from methionine and ATP. The overall synthetic reaction is composed of two sequential steps, AdoMet formation and the subsequent tripolyphosphate hydrolysis which occurs prior to release of AdoMet from the enzyme. This Chlorobaculum tepidum (strain ATCC 49652 / DSM 12025 / NBRC 103806 / TLS) (Chlorobium tepidum) protein is S-adenosylmethionine synthase.